A 91-amino-acid chain; its full sequence is ATP synthase subunit c 2 (91 aa).

The next 2 membrane-spanning stretches (helical) occupy residues 4 to 24 and 53 to 73; these read FSMC…GTGI and IGLA…LIIL.

Belongs to the ATPase C chain family. F-type ATPases have 2 components, F(1) - the catalytic core - and F(0) - the membrane proton channel. F(1) has five subunits: alpha(3), beta(3), gamma(1), delta(1), epsilon(1). F(0) has three main subunits: a(1), b(2) and c(10-14). The alpha and beta chains form an alternating ring which encloses part of the gamma chain. F(1) is attached to F(0) by a central stalk formed by the gamma and epsilon chains, while a peripheral stalk is formed by the delta and b chains.

The protein resides in the cell inner membrane. Its function is as follows. F(1)F(0) ATP synthase produces ATP from ADP in the presence of a proton or sodium gradient. F-type ATPases consist of two structural domains, F(1) containing the extramembraneous catalytic core and F(0) containing the membrane proton channel, linked together by a central stalk and a peripheral stalk. During catalysis, ATP synthesis in the catalytic domain of F(1) is coupled via a rotary mechanism of the central stalk subunits to proton translocation. In terms of biological role, key component of the F(0) channel; it plays a direct role in translocation across the membrane. A homomeric c-ring of between 10-14 subunits forms the central stalk rotor element with the F(1) delta and epsilon subunits. The polypeptide is ATP synthase subunit c 2 (Pelobacter propionicus (strain DSM 2379 / NBRC 103807 / OttBd1)).